We begin with the raw amino-acid sequence, 142 residues long: Large ribosomal subunit protein uL13 (142 aa).

It belongs to the universal ribosomal protein uL13 family. Part of the 50S ribosomal subunit.

This protein is one of the early assembly proteins of the 50S ribosomal subunit, although it is not seen to bind rRNA by itself. It is important during the early stages of 50S assembly. The polypeptide is Large ribosomal subunit protein uL13 (Methylococcus capsulatus (strain ATCC 33009 / NCIMB 11132 / Bath)).